Reading from the N-terminus, the 431-residue chain is Putative serine/threonine-protein kinase A (431 aa).

In terms of domain architecture, Protein kinase spans 20–279 (YLNKGIVGLG…VREIFQIPYI (260 aa)). Residues 26-34 (VGLGSYGEA) and Lys-49 each bind ATP. Asp-147 functions as the Proton acceptor in the catalytic mechanism. Positions 331–429 (DVTHRGHVNK…WVHAIQRGIG (99 aa)) constitute a PH domain.

Belongs to the protein kinase superfamily. Ser/Thr protein kinase family.

The enzyme catalyses L-seryl-[protein] + ATP = O-phospho-L-seryl-[protein] + ADP + H(+). It catalyses the reaction L-threonyl-[protein] + ATP = O-phospho-L-threonyl-[protein] + ADP + H(+). The chain is Putative serine/threonine-protein kinase A (NRKA) from Trypanosoma brucei brucei.